The chain runs to 160 residues: GTP-dependent dephospho-CoA kinase (160 aa).

Asp45, Ile46, Val47, Asp59, Lys61, Glu108, and Asp130 together coordinate GTP.

The protein belongs to the GTP-dependent DPCK family.

The enzyme catalyses 3'-dephospho-CoA + GTP = GDP + CoA + H(+). It functions in the pathway cofactor biosynthesis; coenzyme A biosynthesis. In terms of biological role, catalyzes the GTP-dependent phosphorylation of the 3'-hydroxyl group of dephosphocoenzyme A to form coenzyme A (CoA). This Staphylothermus marinus (strain ATCC 43588 / DSM 3639 / JCM 9404 / F1) protein is GTP-dependent dephospho-CoA kinase.